A 100-amino-acid chain; its full sequence is Large ribosomal subunit protein uL23 (100 aa).

This sequence belongs to the universal ribosomal protein uL23 family. Part of the 50S ribosomal subunit. Contacts protein L29, and trigger factor when it is bound to the ribosome.

In terms of biological role, one of the early assembly proteins it binds 23S rRNA. One of the proteins that surrounds the polypeptide exit tunnel on the outside of the ribosome. Forms the main docking site for trigger factor binding to the ribosome. This Xylella fastidiosa (strain M23) protein is Large ribosomal subunit protein uL23.